Consider the following 372-residue polypeptide: MITMKVKNFIYLPFCLFIGTSVAGALPEIPEPFKYGVGGIENGKIYIGLGSLGNNWYMIDTNQSEKKWTKIAQWPTVPREQATATIIDGKIYVFGGIGKDTSGVITLQKDVYSYDIAKDKWEKLMTRPPVSLAGHVSFIHNGHAVSTGGVNENIFNGYFSDVELSKGNSALTEKVNRDYFSKPADDYFLNNHIISYDPSKNQWKNLGTTPFPGTAGSSVIFAEQQIYILGGERKPGLRSVRSWTGELSHDRIKWSELPPVASPEGVSGAYASVIDGNIFLAGGAYFPGAAEKYSNGEYWSHKGLDKAYSKEIYQLIKNDWKKVGSLPEGLAYGVSLPWQGGMLILGGEKKDGKAVSDVIYLKKNDKQIKIVK.

The N-terminal stretch at 1–25 (MITMKVKNFIYLPFCLFIGTSVAGA) is a signal peptide. Kelch repeat units lie at residues 44-88 (KIYI…TIID), 90-141 (KIYV…FIHN), 143-177 (HAVS…KVNR), 178-223 (DYFS…IFAE), 226-269 (IYIL…VSGA), 291-340 (EKYS…PWQG), and 342-371 (MLIL…IKIV). The Proton acceptor role is filled by Glu232.

The protein belongs to the NanM family. Homodimer.

The protein resides in the periplasm. It carries out the reaction N-acetyl-alpha-neuraminate = N-acetyl-beta-neuraminate. Functionally, converts alpha-N-acetylneuranimic acid (Neu5Ac) to the beta-anomer, accelerating the equilibrium between the alpha- and beta-anomers. Probably facilitates sialidase-negative bacteria to compete successfully for limited amounts of extracellular Neu5Ac, which is likely taken up in the beta-anomer. In addition, the rapid removal of sialic acid from solution might be advantageous to the bacterium to damp down host responses. This chain is N-acetylneuraminate epimerase 1, found in Escherichia coli O6:H1 (strain CFT073 / ATCC 700928 / UPEC).